A 269-amino-acid polypeptide reads, in one-letter code: MTAEGEAKNPSAGGGGDNPQHQQAAPAPAPAQGEVAQEAAVQGTGQEQERDKADREVQGGAGEKDDGACRDLVLVEDPEVLAVEDPEEAAATAALQEEMKALVASIPDGAGAAFTAMQLQELEQQSRVYQYMAARVPVPTHLVFPVWKSVTGASSEGAQKYPTLMGLATLCLDFGKNPEPEPGRCRRTDGKKWRCWRNTIPNEKYCERHMHRGRKRPVQVFLEDDEPDSASGSKPAAPGKATEGAKKADDKSPSSKKLAVAAPAAVQST.

Residues 1-71 are disordered; sequence MTAEGEAKNP…GEKDDGACRD (71 aa). The segment covering 22-43 has biased composition (low complexity); the sequence is QQAAPAPAPAQGEVAQEAAVQG. Residues 47–69 are compositionally biased toward basic and acidic residues; the sequence is EQERDKADREVQGGAGEKDDGAC. A QLQ domain is found at 113-148; it reads AFTAMQLQELEQQSRVYQYMAARVPVPTHLVFPVWK. The WRC domain occupies 179–223; the sequence is EPEPGRCRRTDGKKWRCWRNTIPNEKYCERHMHRGRKRPVQVFLE. 2 consecutive short sequence motifs (bipartite nuclear localization signal) follow at residues 184–194 and 212–216; these read RCRRTDGKKWR and RGRKR. A disordered region spans residues 217–269; that stretch reads PVQVFLEDDEPDSASGSKPAAPGKATEGAKKADDKSPSSKKLAVAAPAAVQST. The segment covering 243 to 253 has biased composition (basic and acidic residues); that stretch reads EGAKKADDKSP.

This sequence belongs to the GRF family. In terms of assembly, interacts with GIF1. Highly expressed in shoots. Expressed in developing leaves.

The protein resides in the nucleus. Functionally, involved in the regulation of cell proliferation in developing shoots and leaves. Does not possess transactivation activity. The polypeptide is GRF-interacting factor 10 (Zea mays (Maize)).